A 198-amino-acid polypeptide reads, in one-letter code: Glycerol-3-phosphate acyltransferase (198 aa).

Transmembrane regions (helical) follow at residues 5–25 (LILL…LWIG), 56–76 (SIVT…PFFF), 84–104 (FWLL…FAGF), 114–134 (AGVI…VFLV), and 158–178 (LFMG…FVIW).

The protein belongs to the PlsY family. As to quaternary structure, probably interacts with PlsX.

The protein localises to the cell membrane. The enzyme catalyses an acyl phosphate + sn-glycerol 3-phosphate = a 1-acyl-sn-glycero-3-phosphate + phosphate. Its pathway is lipid metabolism; phospholipid metabolism. In terms of biological role, catalyzes the transfer of an acyl group from acyl-phosphate (acyl-PO(4)) to glycerol-3-phosphate (G3P) to form lysophosphatidic acid (LPA). This enzyme utilizes acyl-phosphate as fatty acyl donor, but not acyl-CoA or acyl-ACP. The chain is Glycerol-3-phosphate acyltransferase from Listeria monocytogenes serotype 4b (strain CLIP80459).